A 379-amino-acid chain; its full sequence is Alcohol dehydrogenase class-3 (379 aa).

Ala-2 is subject to N-acetylalanine. Position 47 (Cys-47) interacts with Zn(2+). Position 48 (His-48) interacts with NAD(+). Residues Thr-49 and His-69 each contribute to the an alcohol site. Residues His-69, Glu-70, Cys-99, Cys-102, Cys-105, Cys-113, and Cys-177 each contribute to the Zn(2+) site. Residues 202 to 207 (GLGTVG), Asp-226, Lys-231, Ile-272, 295 to 297 (VGV), 320 to 322 (TAF), and Arg-372 contribute to the NAD(+) site.

It belongs to the zinc-containing alcohol dehydrogenase family. Class-III subfamily. In terms of assembly, homodimer. The cofactor is Zn(2+). In terms of tissue distribution, ubiquitous.

The protein resides in the cytoplasm. The catalysed reaction is a primary alcohol + NAD(+) = an aldehyde + NADH + H(+). The enzyme catalyses a secondary alcohol + NAD(+) = a ketone + NADH + H(+). It carries out the reaction S-(hydroxymethyl)glutathione + NADP(+) = S-formylglutathione + NADPH + H(+). It catalyses the reaction S-(hydroxymethyl)glutathione + NAD(+) = S-formylglutathione + NADH + H(+). The catalysed reaction is S-nitrosoglutathione + NADH + H(+) = S-(hydroxysulfenamide)glutathione + NAD(+). Its activity is regulated as follows. Repressed by thiol-modifying agents N-ethylmaleimide (NEM) and 5,5-dithio-bis-(2-nitrobenzoic acid) (DTNB), as well as by methyl methanethiosulfonate (MMTS) in a dose-dependent manner. Inhibited by hydrogen peroxide H(2)O(2). Its function is as follows. Alcohol dehydrogenase catalyzing the reduction of nitrosoglutathione. Can also use long-chain alcohols including cinnamyl alcohol and geraniol, and, to a lower extent, octanol. Plays a central role in formaldehyde detoxification. Not able to use ethanol (EtOH) as substrate. The protein is Alcohol dehydrogenase class-3 of Arabidopsis thaliana (Mouse-ear cress).